We begin with the raw amino-acid sequence, 509 residues long: Glycogen synthase (509 aa).

Lysine 47 contributes to the ADP-alpha-D-glucose binding site.

This sequence belongs to the glycosyltransferase 1 family. Bacterial/plant glycogen synthase subfamily.

The catalysed reaction is [(1-&gt;4)-alpha-D-glucosyl](n) + ADP-alpha-D-glucose = [(1-&gt;4)-alpha-D-glucosyl](n+1) + ADP + H(+). It participates in glycan biosynthesis; glycogen biosynthesis. Synthesizes alpha-1,4-glucan chains using ADP-glucose. This Xanthomonas euvesicatoria pv. vesicatoria (strain 85-10) (Xanthomonas campestris pv. vesicatoria) protein is Glycogen synthase.